The chain runs to 238 residues: CD63 antigen (238 aa).

Residues 2-11 (AVEGGMKCVK) lie on the Cytoplasmic side of the membrane. The helical transmembrane segment at 12–32 (FLLYVLLLAFCACAVGLIAIG) threads the bilayer. The Extracellular portion of the chain corresponds to 33 to 51 (VAVQVVLKQAITHETTAGS). The helical transmembrane segment at 52–72 (LLPVVIIAVGAFLFLVAFVGC) threads the bilayer. At 73 to 81 (CGACKENYC) the chain is on the cytoplasmic side. A helical membrane pass occupies residues 82–102 (LMITFAIFLSLIMLVEVAVAI). Over 103–203 (AGYVFRDQVK…TIAAWLRKNV (101 aa)) the chain is Extracellular. Asn130, Asn150, and Asn172 each carry an N-linked (GlcNAc...) asparagine glycan. A helical membrane pass occupies residues 204–224 (LLVAGAALGIAFVEVLGIIFS). At 225–238 (CCLVKSIRSGYEVM) the chain is on the cytoplasmic side. A Lysosomal targeting motif motif is present at residues 234–238 (GYEVM).

It belongs to the tetraspanin (TM4SF) family. Interacts with TIMP1 and ITGB1 and recruits TIMP1 to ITGB1. Interacts with CD9. Identified in a complex with CD9 and ITGB3. Interacts with PMEL. Interacts with KDR/VEGFR2; identified in a complex with ITGB1 and KDR/VEGFR2 and is required to recruit KDR to ITGB1 complexes. Interacts with SYT7. Palmitoylated at a low, basal level in unstimulated platelets. The level of palmitoylation increases when platelets are activated by thrombin (in vitro). As to expression, detected in mast cells and platelets (at protein level).

The protein localises to the cell membrane. It is found in the lysosome membrane. Its subcellular location is the late endosome membrane. The protein resides in the endosome. It localises to the multivesicular body. The protein localises to the melanosome. It is found in the secreted. Its subcellular location is the extracellular exosome. The protein resides in the cell surface. Its function is as follows. Functions as a cell surface receptor for TIMP1 and plays a role in the activation of cellular signaling cascades. Plays a role in the activation of ITGB1 and integrin signaling, leading to the activation of AKT, FAK/PTK2 and MAP kinases. Promotes cell survival, reorganization of the actin cytoskeleton, cell adhesion, spreading and migration, via its role in the activation of AKT and FAK/PTK2. Plays a role in VEGFA signaling via its role in regulating the internalization of KDR/VEGFR2. Plays a role in intracellular vesicular transport processes, and is required for normal trafficking of the PMEL luminal domain that is essential for the development and maturation of melanocytes. Plays a role in the adhesion of leukocytes onto endothelial cells via its role in the regulation of SELP trafficking. May play a role in mast cell degranulation in response to Ms4a2/FceRI stimulation, but not in mast cell degranulation in response to other stimuli. This is CD63 antigen (Cd63) from Rattus norvegicus (Rat).